A 517-amino-acid polypeptide reads, in one-letter code: 2-isopropylmalate synthase (517 aa).

The 263-residue stretch at 5-267 folds into the Pyruvate carboxyltransferase domain; it reads VIIFDTTLRD…HTNVRCQEIY (263 aa). Mn(2+)-binding residues include D14, H202, H204, and N238. A regulatory domain region spans residues 392–517; it reads RLKCFHVDSS…QRKYIKKNNN (126 aa).

Belongs to the alpha-IPM synthase/homocitrate synthase family. LeuA type 1 subfamily. As to quaternary structure, homodimer. Requires Mn(2+) as cofactor.

The protein resides in the cytoplasm. It catalyses the reaction 3-methyl-2-oxobutanoate + acetyl-CoA + H2O = (2S)-2-isopropylmalate + CoA + H(+). It participates in amino-acid biosynthesis; L-leucine biosynthesis; L-leucine from 3-methyl-2-oxobutanoate: step 1/4. Its function is as follows. Catalyzes the condensation of the acetyl group of acetyl-CoA with 3-methyl-2-oxobutanoate (2-ketoisovalerate) to form 3-carboxy-3-hydroxy-4-methylpentanoate (2-isopropylmalate). This is 2-isopropylmalate synthase from Blochmanniella pennsylvanica (strain BPEN).